The sequence spans 236 residues: 2,3,4,5-tetrahydropyridine-2,6-dicarboxylate N-acetyltransferase (236 aa).

The protein belongs to the transferase hexapeptide repeat family. DapH subfamily.

It carries out the reaction (S)-2,3,4,5-tetrahydrodipicolinate + acetyl-CoA + H2O = L-2-acetamido-6-oxoheptanedioate + CoA. It functions in the pathway amino-acid biosynthesis; L-lysine biosynthesis via DAP pathway; LL-2,6-diaminopimelate from (S)-tetrahydrodipicolinate (acetylase route): step 1/3. Functionally, catalyzes the transfer of an acetyl group from acetyl-CoA to tetrahydrodipicolinate. The protein is 2,3,4,5-tetrahydropyridine-2,6-dicarboxylate N-acetyltransferase of Limosilactobacillus reuteri (strain DSM 20016) (Lactobacillus reuteri).